A 391-amino-acid chain; its full sequence is MFQKYRPVWEEINLDNLVYNIGQIKSKIGNKELIGVIKADAYGHGAVEIAKVLLENGVSRLAVAILDEAIELRKNKIKVPIMVLGIIPHAFLDEIMNYDIEPIVPSYSYASKLSKLAESKDKKIKVHIALDTGMGRIGFSIDPNSVEEIGKISKLPNIEIQSLFSHFSTADETDKAYSCEQFKKYKLLYEELVKKNVKINMRTISNSAAIMELPDTYCDLVRPGIIMYGYYPSTEVDKNNLSIKPIMTLKANVVYVKVLESGSYIGYGRKFKCNRKSVIATLPLGYADGYTRRLFGKAKVIINGKFAPVVGNICMDQCMVDVTDVGEVNIGDEVVLIGEKDGLKFNADDIAEITGTISYEVLCMIGRRVPKLYIKGGEVVKIKNYVISSDS.

The active-site Proton acceptor; specific for D-alanine is lysine 38. N6-(pyridoxal phosphate)lysine is present on lysine 38. Arginine 136 contacts substrate. The Proton acceptor; specific for L-alanine role is filled by tyrosine 267. Methionine 315 contacts substrate.

This sequence belongs to the alanine racemase family. The cofactor is pyridoxal 5'-phosphate.

It carries out the reaction L-alanine = D-alanine. It participates in amino-acid biosynthesis; D-alanine biosynthesis; D-alanine from L-alanine: step 1/1. Its function is as follows. Catalyzes the interconversion of L-alanine and D-alanine. May also act on other amino acids. The polypeptide is Alanine racemase (alr) (Clostridium kluyveri (strain ATCC 8527 / DSM 555 / NBRC 12016 / NCIMB 10680 / K1)).